Here is a 205-residue protein sequence, read N- to C-terminus: Large ribosomal subunit protein uL4 (205 aa).

Positions 43–77 (RRRSGTASTKGRSDVAGSRAKLFRQKGTGRARRGD) are disordered. Basic residues predominate over residues 63–73 (KLFRQKGTGRA).

The protein belongs to the universal ribosomal protein uL4 family. Part of the 50S ribosomal subunit.

In terms of biological role, one of the primary rRNA binding proteins, this protein initially binds near the 5'-end of the 23S rRNA. It is important during the early stages of 50S assembly. It makes multiple contacts with different domains of the 23S rRNA in the assembled 50S subunit and ribosome. Its function is as follows. Forms part of the polypeptide exit tunnel. In Desulfosudis oleivorans (strain DSM 6200 / JCM 39069 / Hxd3) (Desulfococcus oleovorans), this protein is Large ribosomal subunit protein uL4.